Consider the following 445-residue polypeptide: Phosphoglucosamine mutase (445 aa).

The active-site Phosphoserine intermediate is the serine 102. Mg(2+)-binding residues include serine 102, aspartate 241, aspartate 243, and aspartate 245. Serine 102 carries the post-translational modification Phosphoserine.

This sequence belongs to the phosphohexose mutase family. Mg(2+) is required as a cofactor. Post-translationally, activated by phosphorylation.

It carries out the reaction alpha-D-glucosamine 1-phosphate = D-glucosamine 6-phosphate. Functionally, catalyzes the conversion of glucosamine-6-phosphate to glucosamine-1-phosphate. The polypeptide is Phosphoglucosamine mutase (Novosphingobium aromaticivorans (strain ATCC 700278 / DSM 12444 / CCUG 56034 / CIP 105152 / NBRC 16084 / F199)).